A 283-amino-acid polypeptide reads, in one-letter code: Movement protein (283 aa).

The protein belongs to the cucumovirus movement protein family.

The protein localises to the host cell junction. It localises to the host plasmodesma. Functionally, transports viral genome to neighboring plant cells directly through plasmosdesmata, without any budding. The movement protein allows efficient cell to cell propagation, by bypassing the host cell wall barrier. Acts by forming a tubular structure at the host plasmodesmata, enlarging it enough to allow free passage of virion capsids. The chain is Movement protein from Cucumis sativus (Cucumber).